The primary structure comprises 460 residues: MFS-type transporter PUL3 (460 aa).

Helical transmembrane passes span 16–36, 50–70, 81–101, 113–133, 151–171, 181–201, 240–260, and 271–291; these read AVTL…SSVV, YLFI…FIIG, WVII…SCAG, IICG…TAIS, GICM…DFTV, APTF…MFVL, MFLS…FLTL, and VAFM…PDLV. Residues 300-323 form a disordered region; that stretch reads PSTQDETDTSDNDKIEKEESEQKS. Residues 310 to 323 are compositionally biased toward basic and acidic residues; that stretch reads DNDKIEKEESEQKS. The next 4 helical transmembrane spans lie at 333–353, 369–389, 408–428, and 433–453; these read VSLT…MIGA, IFFT…GSSV, FIGA…AALY, and GLPI…PSLV.

Belongs to the major facilitator superfamily. TCR/Tet family.

It is found in the cell membrane. Functionally, MFS-type transporer required for the uptake of iron via the uptake of the siderophore pulcherrimin-iron complex. The protein is MFS-type transporter PUL3 of Kluyveromyces lactis (strain ATCC 8585 / CBS 2359 / DSM 70799 / NBRC 1267 / NRRL Y-1140 / WM37) (Yeast).